A 98-amino-acid polypeptide reads, in one-letter code: NADH-ubiquinone oxidoreductase chain 4L (98 aa).

The next 3 helical transmembrane spans lie at 1–21 (MTLI…GLLM), 29–49 (ALLC…LTIL), and 61–81 (IILL…LVMV).

This sequence belongs to the complex I subunit 4L family. In terms of assembly, core subunit of respiratory chain NADH dehydrogenase (Complex I) which is composed of 45 different subunits.

The protein localises to the mitochondrion inner membrane. It catalyses the reaction a ubiquinone + NADH + 5 H(+)(in) = a ubiquinol + NAD(+) + 4 H(+)(out). Core subunit of the mitochondrial membrane respiratory chain NADH dehydrogenase (Complex I) which catalyzes electron transfer from NADH through the respiratory chain, using ubiquinone as an electron acceptor. Part of the enzyme membrane arm which is embedded in the lipid bilayer and involved in proton translocation. This is NADH-ubiquinone oxidoreductase chain 4L (MT-ND4L) from Balaenoptera physalus (Fin whale).